Here is a 381-residue protein sequence, read N- to C-terminus: L-lactate dehydrogenase A-like 6B (381 aa).

NAD(+) contacts are provided by residues D101–K106 and R148. R155, N187, and R218 together coordinate substrate. N187 serves as a coordination point for NAD(+). The active-site Proton acceptor is H242. Position 297 (T297) interacts with substrate.

Belongs to the LDH/MDH superfamily. LDH family. Testis specific.

The catalysed reaction is (S)-lactate + NAD(+) = pyruvate + NADH + H(+). Its pathway is fermentation; pyruvate fermentation to lactate; (S)-lactate from pyruvate: step 1/1. The protein is L-lactate dehydrogenase A-like 6B (LDHAL6B) of Homo sapiens (Human).